Here is an 81-residue protein sequence, read N- to C-terminus: Photosystem I iron-sulfur center (81 aa).

4Fe-4S ferredoxin-type domains are found at residues 2-31 and 39-68; these read SHSVKIYDTCIGCTQCVRACPTDVLEMIPW and IASAPRTEDCVGCKRCESACPTDFLSVRVY. [4Fe-4S] cluster is bound by residues cysteine 11, cysteine 14, cysteine 17, cysteine 21, cysteine 48, cysteine 51, cysteine 54, and cysteine 58.

In terms of assembly, the eukaryotic PSI reaction center is composed of at least 11 subunits. It depends on [4Fe-4S] cluster as a cofactor.

It localises to the plastid thylakoid membrane. It catalyses the reaction reduced [plastocyanin] + hnu + oxidized [2Fe-2S]-[ferredoxin] = oxidized [plastocyanin] + reduced [2Fe-2S]-[ferredoxin]. In terms of biological role, apoprotein for the two 4Fe-4S centers FA and FB of photosystem I (PSI); essential for photochemical activity. FB is the terminal electron acceptor of PSI, donating electrons to ferredoxin. The C-terminus interacts with PsaA/B/D and helps assemble the protein into the PSI complex. Required for binding of PsaD and PsaE to PSI. PSI is a plastocyanin-ferredoxin oxidoreductase, converting photonic excitation into a charge separation, which transfers an electron from the donor P700 chlorophyll pair to the spectroscopically characterized acceptors A0, A1, FX, FA and FB in turn. The chain is Photosystem I iron-sulfur center from Cuscuta reflexa (Southern Asian dodder).